Reading from the N-terminus, the 275-residue chain is Formamidopyrimidine-DNA glycosylase (275 aa).

P2 serves as the catalytic Schiff-base intermediate with DNA. The Proton donor role is filled by E3. The Proton donor; for beta-elimination activity role is filled by K58. DNA-binding residues include H93, R111, and R156. The FPG-type zinc finger occupies 241-275 (FVYDRAGQPCRVCGTPVRQIVQGQRSTYFCPTCQR). The active-site Proton donor; for delta-elimination activity is R265.

Belongs to the FPG family. As to quaternary structure, monomer. Requires Zn(2+) as cofactor.

The enzyme catalyses Hydrolysis of DNA containing ring-opened 7-methylguanine residues, releasing 2,6-diamino-4-hydroxy-5-(N-methyl)formamidopyrimidine.. The catalysed reaction is 2'-deoxyribonucleotide-(2'-deoxyribose 5'-phosphate)-2'-deoxyribonucleotide-DNA = a 3'-end 2'-deoxyribonucleotide-(2,3-dehydro-2,3-deoxyribose 5'-phosphate)-DNA + a 5'-end 5'-phospho-2'-deoxyribonucleoside-DNA + H(+). In terms of biological role, involved in base excision repair of DNA damaged by oxidation or by mutagenic agents. Acts as a DNA glycosylase that recognizes and removes damaged bases. Has a preference for oxidized purines, such as 7,8-dihydro-8-oxoguanine (8-oxoG). Has AP (apurinic/apyrimidinic) lyase activity and introduces nicks in the DNA strand. Cleaves the DNA backbone by beta-delta elimination to generate a single-strand break at the site of the removed base with both 3'- and 5'-phosphates. The chain is Formamidopyrimidine-DNA glycosylase from Burkholderia cenocepacia (strain HI2424).